Here is a 322-residue protein sequence, read N- to C-terminus: PIH1 domain-containing protein 2 (322 aa).

It belongs to the PIH1 family.

This chain is PIH1 domain-containing protein 2 (pih1d2), found in Danio rerio (Zebrafish).